The primary structure comprises 132 residues: Small ribosomal subunit protein uS8c (132 aa).

The protein belongs to the universal ribosomal protein uS8 family. In terms of assembly, part of the 30S ribosomal subunit.

It localises to the plastid. Its subcellular location is the chloroplast. Functionally, one of the primary rRNA binding proteins, it binds directly to 16S rRNA central domain where it helps coordinate assembly of the platform of the 30S subunit. The chain is Small ribosomal subunit protein uS8c (rps8) from Nandina domestica (Heavenly bamboo).